The chain runs to 88 residues: Phosphocarrier protein HPr (88 aa).

The 88-residue stretch at 1-88 (MEQKSYVIID…DILSKEGLTK (88 aa)) folds into the HPr domain. The active-site Pros-phosphohistidine intermediate is the His-15. Residue Ser-46 is modified to Phosphoserine; by HPrK/P.

This sequence belongs to the HPr family.

It localises to the cytoplasm. With respect to regulation, phosphorylation on Ser-46 inhibits the phosphoryl transfer from enzyme I to HPr. Functionally, general (non sugar-specific) component of the phosphoenolpyruvate-dependent sugar phosphotransferase system (sugar PTS). This major carbohydrate active-transport system catalyzes the phosphorylation of incoming sugar substrates concomitantly with their translocation across the cell membrane. The phosphoryl group from phosphoenolpyruvate (PEP) is transferred to the phosphoryl carrier protein HPr by enzyme I. Phospho-HPr then transfers it to the PTS EIIA domain. The polypeptide is Phosphocarrier protein HPr (ptsH) (Staphylococcus xylosus).